The chain runs to 1653 residues: Ciliary rootlet coiled-coil protein 2 (1653 aa).

Over residues 1-17 (MSSASSEPGNGDASQQP) the composition is skewed to polar residues. The disordered stretch occupies residues 1 to 57 (MSSASSEPGNGDASQQPLLGLDTVIQRLEDTILSPTASREDRALTVRGEGRQASPTP). The segment covering 38 to 50 (SREDRALTVRGEG) has biased composition (basic and acidic residues). Coiled-coil stretches lie at residues 86–145 (VARV…SELE) and 310–351 (KVAL…LVAQ). Residues 367-396 (LGEPRRPLRSPQRATSPHQGASPPHICSPA) form a disordered region. Residues 423–1215 (LKSSQALVAS…QRKLAEVEAA (793 aa)) adopt a coiled-coil conformation. Positions 1302-1356 (GLQRQSPWASPEQPGSPTKGSDSSQALPGQQGTSPPARPHSPLRWPSPTPGGRSS) are disordered. Residues 1304 to 1335 (QRQSPWASPEQPGSPTKGSDSSQALPGQQGTS) are compositionally biased toward polar residues. Positions 1361-1570 (VATVQDILRD…QAQMTEMEQA (210 aa)) form a coiled coil.

Belongs to the rootletin family.

The sequence is that of Ciliary rootlet coiled-coil protein 2 from Homo sapiens (Human).